Reading from the N-terminus, the 361-residue chain is Beta-hexosaminidase (361 aa).

Substrate-binding positions include D69, R77, R144, and K174–H175. H187 serves as the catalytic Proton donor/acceptor. D258 functions as the Nucleophile in the catalytic mechanism.

It belongs to the glycosyl hydrolase 3 family. NagZ subfamily.

The protein localises to the cytoplasm. It catalyses the reaction Hydrolysis of terminal non-reducing N-acetyl-D-hexosamine residues in N-acetyl-beta-D-hexosaminides.. It functions in the pathway cell wall biogenesis; peptidoglycan recycling. Its function is as follows. Plays a role in peptidoglycan recycling by cleaving the terminal beta-1,4-linked N-acetylglucosamine (GlcNAc) from peptide-linked peptidoglycan fragments, giving rise to free GlcNAc, anhydro-N-acetylmuramic acid and anhydro-N-acetylmuramic acid-linked peptides. The polypeptide is Beta-hexosaminidase (Neisseria gonorrhoeae (strain ATCC 700825 / FA 1090)).